Consider the following 792-residue polypeptide: Phenylalanine--tRNA ligase beta subunit (792 aa).

Positions 39–150 constitute a tRNA-binding domain; sequence GDEITNVVTG…ENTPIGKDIK (112 aa). Residues 404–479 form the B5 domain; the sequence is SEPNIVEVDY…RIYGYNKVPS (76 aa). Mg(2+) contacts are provided by Asp-457, Asp-463, Glu-466, and Glu-467. An FDX-ACB domain is found at 699–792; that stretch reads PKFPTVTRDI…LEHVLGAELR (94 aa).

Belongs to the phenylalanyl-tRNA synthetase beta subunit family. Type 1 subfamily. Tetramer of two alpha and two beta subunits. Requires Mg(2+) as cofactor.

It localises to the cytoplasm. The catalysed reaction is tRNA(Phe) + L-phenylalanine + ATP = L-phenylalanyl-tRNA(Phe) + AMP + diphosphate + H(+). The chain is Phenylalanine--tRNA ligase beta subunit from Clostridium acetobutylicum (strain ATCC 824 / DSM 792 / JCM 1419 / IAM 19013 / LMG 5710 / NBRC 13948 / NRRL B-527 / VKM B-1787 / 2291 / W).